Reading from the N-terminus, the 551-residue chain is Hydroxymethylpyrimidine/phosphomethylpyrimidine kinase THI21 (551 aa).

Glutamine 64 is a binding site for 4-amino-5-hydroxymethyl-2-methylpyrimidine.

It in the N-terminal section; belongs to the ThiD family. This sequence in the C-terminal section; belongs to the thiaminase-2 family.

The enzyme catalyses 4-amino-5-hydroxymethyl-2-methylpyrimidine + ATP = 4-amino-2-methyl-5-(phosphooxymethyl)pyrimidine + ADP + H(+). The catalysed reaction is 4-amino-2-methyl-5-(phosphooxymethyl)pyrimidine + ATP = 4-amino-2-methyl-5-(diphosphooxymethyl)pyrimidine + ADP. The protein operates within cofactor biosynthesis; thiamine diphosphate biosynthesis; 4-amino-2-methyl-5-diphosphomethylpyrimidine from 5-amino-1-(5-phospho-D-ribosyl)imidazole: step 2/3. It functions in the pathway cofactor biosynthesis; thiamine diphosphate biosynthesis; 4-amino-2-methyl-5-diphosphomethylpyrimidine from 5-amino-1-(5-phospho-D-ribosyl)imidazole: step 3/3. Its function is as follows. Catalyzes the phosphorylation of hydroxymethylpyrimidine phosphate (HMP-P) to HMP-PP, and also probably that of HMP to HMP-P. The protein is Hydroxymethylpyrimidine/phosphomethylpyrimidine kinase THI21 (THI21) of Saccharomyces cerevisiae (strain ATCC 204508 / S288c) (Baker's yeast).